The sequence spans 73 residues: Alpha-amylase inhibitor Paim-1 (73 aa).

2 cysteine pairs are disulfide-bonded: Cys-8–Cys-24 and Cys-42–Cys-70.

Functionally, inhibits mammalian alpha-amylases specifically but has no action on plant and microbial alpha-amylases. The chain is Alpha-amylase inhibitor Paim-1 from Streptomyces olivaceoviridis (Streptomyces corchorusii).